Reading from the N-terminus, the 404-residue chain is MCSIGEDDFGDEGAAHAMVVEALPLGIVLSPGNCSKCDVNSNELYKLNFREAECRECFLAYARHKFRAALGAAKILPRNAEVLLVLDGSAKSLVLLDMLHFAQTQNTFKRLHCNVHVVYVEEQHVQDRDPVGLEDLLSVSRQYAPFEFYVIELGQGCSLQRIKDYSPSLKANNELIYKLQKLQSLTARQDYLQQHRKNLICSVAQSLHCTHVFESNISVDLATQLLTAIALGRGASAALDVALLDDRLSGDVKLLRPLKDLSEQEITFYIHAQRLKPLFQNGSHYGMERGQTASIQNLTSAFVANLQQNYASTVSTVFRTGDKIAVNSNPEQASCVHCRSALDSELSDTLLAIEYSRSVSEAGVSLNKNEKDLEGLAKKRLEKQDGLCHACRTIQAEFDSGNLL.

It belongs to the CTU2/NCS2 family.

The protein resides in the cytoplasm. Its pathway is tRNA modification; 5-methoxycarbonylmethyl-2-thiouridine-tRNA biosynthesis. Functionally, plays a central role in 2-thiolation of mcm(5)S(2)U at tRNA wobble positions of tRNA(Lys), tRNA(Glu) and tRNA(Gln). May act by forming a heterodimer with NCS6/CTU1 that ligates sulfur from thiocarboxylated URM1 onto the uridine of tRNAs at wobble position. The polypeptide is Cytoplasmic tRNA 2-thiolation protein 2 (Drosophila yakuba (Fruit fly)).